The chain runs to 353 residues: Uroporphyrinogen decarboxylase (353 aa).

Substrate is bound by residues 26–30, aspartate 76, tyrosine 153, threonine 208, and histidine 326; that span reads RQAGR.

It belongs to the uroporphyrinogen decarboxylase family. Homodimer.

Its subcellular location is the cytoplasm. It catalyses the reaction uroporphyrinogen III + 4 H(+) = coproporphyrinogen III + 4 CO2. Its pathway is porphyrin-containing compound metabolism; protoporphyrin-IX biosynthesis; coproporphyrinogen-III from 5-aminolevulinate: step 4/4. Its function is as follows. Catalyzes the decarboxylation of four acetate groups of uroporphyrinogen-III to yield coproporphyrinogen-III. This chain is Uroporphyrinogen decarboxylase, found in Chromohalobacter salexigens (strain ATCC BAA-138 / DSM 3043 / CIP 106854 / NCIMB 13768 / 1H11).